Reading from the N-terminus, the 585-residue chain is Aspartate--tRNA ligase (585 aa).

Residue E171 participates in L-aspartate binding. The tract at residues 195-198 is aspartate; sequence QLFK. R217 is an L-aspartate binding site. Residues 217–219 and Q226 contribute to the ATP site; that span reads RDE. H448 is an L-aspartate binding site. E482 is a binding site for ATP. R489 contacts L-aspartate. 534–537 lines the ATP pocket; that stretch reads GLDR.

The protein belongs to the class-II aminoacyl-tRNA synthetase family. Type 1 subfamily. In terms of assembly, homodimer.

It localises to the cytoplasm. The enzyme catalyses tRNA(Asp) + L-aspartate + ATP = L-aspartyl-tRNA(Asp) + AMP + diphosphate. Catalyzes the attachment of L-aspartate to tRNA(Asp) in a two-step reaction: L-aspartate is first activated by ATP to form Asp-AMP and then transferred to the acceptor end of tRNA(Asp). This is Aspartate--tRNA ligase from Histophilus somni (strain 129Pt) (Haemophilus somnus).